The sequence spans 462 residues: Centrosomal protein of 55 kDa (462 aa).

Residues 1–11 are compositionally biased toward basic and acidic residues; sequence MSSRSPKDLIK. Residues 1–25 form a disordered region; sequence MSSRSPKDLIKSKWGSRPSSSKSDT. Residues 12-23 are compositionally biased toward low complexity; sequence SKWGSRPSSSKS. Coiled coils occupy residues 50 to 185 and 228 to 400; these read KVAN…QQWL and YLQE…KQLH. Serine 96 and serine 99 each carry phosphoserine. Positions 157–235 are interaction with TSG101; it reads ANCFNSSMNS…EGYLQEEKQK (79 aa). The segment at 160–214 is interaction with PDCD6IP; it reads FNSSMNSIHEKEMQLKDALEKNQQWLVYDQQREAYVKGLLAKIFELEKRTETAAA. The segment at 354–462 is required for localization to the interphase centrosome and to the midbody during cytokinesis; that stretch reads QMQACTLDFE…LLVHVEYCMK (109 aa). Residues serine 423 and serine 426 each carry the phosphoserine modification. A Phosphothreonine modification is found at threonine 428. Serine 434 carries the post-translational modification Phosphoserine; by PLK1.

Homodimer. Interacts (phosphorylated on Ser-423 and Ser-426) with PLK1; the interaction is indirect via the MTMR3:MTMR4 heterooligomer, occurs during early mitosis, regulates the phosphorylation of CEP55 by PLK1 and its recruitment to the midbody where it can mediate cell abscission. Interacts with AKAP9/CG-NAP; the interaction occurs in interphase and is lost upon mitotic entry. Interacts with PCNT/Kendrin; the interaction occurs in interphase and is lost upon mitotic entry. Directly interacts with PDCD6IP; this interaction is required for PDCD6IP targeting to the midbody; CEP55 binds PDCD6IP in a 2:1 stoichiometry; PDCD6IP competes with TSG101 for the same binding site. Interacts with TSG101; TSG101 competes with PDCD6IP for the same binding site; interaction is required for cytokinesis. Interacts with MVB12A, VPS37B, VPS37C and VPS28. There is a hierachy of phosphorylation, where both Ser-423 and Ser-426 are phosphorylated at the onset of mitosis, prior to Ser-434. Phosphorylation at Ser-423 and Ser-426 is required for dissociation from the centrosome at the G2/M boundary. Phosphorylation at the 3 sites, Ser-423, Ser-426 and Ser-434, is required for protein function at the final stages of cell division to complete cytokinesis successfully.

Its subcellular location is the cytoplasm. It is found in the cytoskeleton. The protein resides in the microtubule organizing center. It localises to the centrosome. The protein localises to the centriole. Its subcellular location is the cleavage furrow. It is found in the midbody. The protein resides in the midbody ring. Its function is as follows. Plays a role in mitotic exit and cytokinesis. Recruits PDCD6IP and TSG101 to midbody during cytokinesis. Required for successful completion of cytokinesis. Not required for microtubule nucleation. Plays a role in the development of the brain and kidney. The chain is Centrosomal protein of 55 kDa from Rattus norvegicus (Rat).